A 190-amino-acid polypeptide reads, in one-letter code: Holliday junction branch migration complex subunit RuvA (190 aa).

The interval 1 to 64 (MIGKLTGTLL…EDAQLLYGFG (64 aa)) is domain I. The interval 65–137 (TAQERQAFRE…LKGKLGADVG (73 aa)) is domain II. Residues 137–141 (GVRAH) form a flexible linker region. Positions 142–190 (AANDNQADILQALLALGYNDKEAAAALKALPADVGVSEGIKLALKSLSK) are domain III.

It belongs to the RuvA family. In terms of assembly, homotetramer. Forms an RuvA(8)-RuvB(12)-Holliday junction (HJ) complex. HJ DNA is sandwiched between 2 RuvA tetramers; dsDNA enters through RuvA and exits via RuvB. An RuvB hexamer assembles on each DNA strand where it exits the tetramer. Each RuvB hexamer is contacted by two RuvA subunits (via domain III) on 2 adjacent RuvB subunits; this complex drives branch migration. In the full resolvosome a probable DNA-RuvA(4)-RuvB(12)-RuvC(2) complex forms which resolves the HJ.

The protein localises to the cytoplasm. Functionally, the RuvA-RuvB-RuvC complex processes Holliday junction (HJ) DNA during genetic recombination and DNA repair, while the RuvA-RuvB complex plays an important role in the rescue of blocked DNA replication forks via replication fork reversal (RFR). RuvA specifically binds to HJ cruciform DNA, conferring on it an open structure. The RuvB hexamer acts as an ATP-dependent pump, pulling dsDNA into and through the RuvAB complex. HJ branch migration allows RuvC to scan DNA until it finds its consensus sequence, where it cleaves and resolves the cruciform DNA. The polypeptide is Holliday junction branch migration complex subunit RuvA (Acidovorax sp. (strain JS42)).